The chain runs to 176 residues: MTDSPEETTVRVAVGRITRAHGVHGEVGVQVRTDDPDRRFAAGAVLTTDTGVTLTVQRTRWHSGRLLVRFAGIDDRTTAEDLRGRVLFAEVDERVRPEDPEEYYDYQLIGMRVETVTGQEIGVVREVLHLPGQDVLAIERSADGDAFVPFVAALVPEVDVDQRRLRIDPPPGLLEL.

Positions 100–173 (PEEYYDYQLI…RLRIDPPPGL (74 aa)) constitute a PRC barrel domain.

It belongs to the RimM family. Binds ribosomal protein uS19.

The protein resides in the cytoplasm. An accessory protein needed during the final step in the assembly of 30S ribosomal subunit, possibly for assembly of the head region. Essential for efficient processing of 16S rRNA. May be needed both before and after RbfA during the maturation of 16S rRNA. It has affinity for free ribosomal 30S subunits but not for 70S ribosomes. This chain is Ribosome maturation factor RimM, found in Acidothermus cellulolyticus (strain ATCC 43068 / DSM 8971 / 11B).